We begin with the raw amino-acid sequence, 888 residues long: Alanine--tRNA ligase (888 aa).

Zn(2+) is bound by residues histidine 564, histidine 568, cysteine 676, and histidine 680.

This sequence belongs to the class-II aminoacyl-tRNA synthetase family. Zn(2+) is required as a cofactor.

It localises to the cytoplasm. The catalysed reaction is tRNA(Ala) + L-alanine + ATP = L-alanyl-tRNA(Ala) + AMP + diphosphate. Its function is as follows. Catalyzes the attachment of alanine to tRNA(Ala) in a two-step reaction: alanine is first activated by ATP to form Ala-AMP and then transferred to the acceptor end of tRNA(Ala). Also edits incorrectly charged Ser-tRNA(Ala) and Gly-tRNA(Ala) via its editing domain. The chain is Alanine--tRNA ligase from Bartonella tribocorum (strain CIP 105476 / IBS 506).